A 172-amino-acid polypeptide reads, in one-letter code: Crossover junction endodeoxyribonuclease RuvC (172 aa).

Catalysis depends on residues Asp-8, Glu-67, and Asp-139. Residues Asp-8, Glu-67, and Asp-139 each coordinate Mg(2+).

It belongs to the RuvC family. Homodimer which binds Holliday junction (HJ) DNA. The HJ becomes 2-fold symmetrical on binding to RuvC with unstacked arms; it has a different conformation from HJ DNA in complex with RuvA. In the full resolvosome a probable DNA-RuvA(4)-RuvB(12)-RuvC(2) complex forms which resolves the HJ. The cofactor is Mg(2+).

The protein resides in the cytoplasm. It carries out the reaction Endonucleolytic cleavage at a junction such as a reciprocal single-stranded crossover between two homologous DNA duplexes (Holliday junction).. Functionally, the RuvA-RuvB-RuvC complex processes Holliday junction (HJ) DNA during genetic recombination and DNA repair. Endonuclease that resolves HJ intermediates. Cleaves cruciform DNA by making single-stranded nicks across the HJ at symmetrical positions within the homologous arms, yielding a 5'-phosphate and a 3'-hydroxyl group; requires a central core of homology in the junction. The consensus cleavage sequence is 5'-(A/T)TT(C/G)-3'. Cleavage occurs on the 3'-side of the TT dinucleotide at the point of strand exchange. HJ branch migration catalyzed by RuvA-RuvB allows RuvC to scan DNA until it finds its consensus sequence, where it cleaves and resolves the cruciform DNA. The chain is Crossover junction endodeoxyribonuclease RuvC from Hahella chejuensis (strain KCTC 2396).